Here is a 354-residue protein sequence, read N- to C-terminus: Small ribosomal subunit biogenesis GTPase RsgA (354 aa).

Positions Met-1–Gly-46 are disordered. Residues Ala-17–Thr-32 show a composition bias toward basic and acidic residues. The span at Pro-33–Gly-46 shows a compositional bias: polar residues. One can recognise a CP-type G domain in the interval His-108–Phe-276. GTP-binding positions include Asn-164–Asp-167 and Gly-218–Ser-226. Residues Cys-300, Cys-305, His-307, and Cys-313 each coordinate Zn(2+).

The protein belongs to the TRAFAC class YlqF/YawG GTPase family. RsgA subfamily. As to quaternary structure, monomer. Associates with 30S ribosomal subunit, binds 16S rRNA. Zn(2+) serves as cofactor.

It localises to the cytoplasm. In terms of biological role, one of several proteins that assist in the late maturation steps of the functional core of the 30S ribosomal subunit. Helps release RbfA from mature subunits. May play a role in the assembly of ribosomal proteins into the subunit. Circularly permuted GTPase that catalyzes slow GTP hydrolysis, GTPase activity is stimulated by the 30S ribosomal subunit. In Shewanella oneidensis (strain ATCC 700550 / JCM 31522 / CIP 106686 / LMG 19005 / NCIMB 14063 / MR-1), this protein is Small ribosomal subunit biogenesis GTPase RsgA.